The following is a 352-amino-acid chain: Potassium/proton antiporter CemA (352 aa).

3 consecutive transmembrane segments (helical) span residues 52 to 72 (VLVS…IHFF), 227 to 247 (IAAL…IILF), and 312 to 332 (IILL…KYWI).

It belongs to the CemA family.

It is found in the plastid. Its subcellular location is the chloroplast inner membrane. The catalysed reaction is K(+)(in) + H(+)(out) = K(+)(out) + H(+)(in). Contributes to K(+)/H(+) antiport activity by supporting proton efflux to control proton extrusion and homeostasis in chloroplasts in a light-dependent manner to modulate photosynthesis. Prevents excessive induction of non-photochemical quenching (NPQ) under continuous-light conditions. Indirectly promotes efficient inorganic carbon uptake into chloroplasts. The protein is Potassium/proton antiporter CemA of Oltmannsiellopsis viridis (Marine flagellate).